A 147-amino-acid polypeptide reads, in one-letter code: Hemoglobin subunit beta (147 aa).

The residue at position 2 (Val2) is an N-acetylvaline. The region spanning 3 to 147 is the Globin domain; sequence HLTGEEKAAV…VANALAHKYH (145 aa). A Phosphothreonine modification is found at Thr13. The residue at position 45 (Ser45) is a Phosphoserine. An N6-acetyllysine modification is found at Lys60. His64 provides a ligand contact to heme b. Position 83 is an N6-acetyllysine (Lys83). His93 provides a ligand contact to heme b. Cys94 is modified (S-nitrosocysteine). An N6-acetyllysine modification is found at Lys145.

The protein belongs to the globin family. As to quaternary structure, heterotetramer of two alpha chains and two beta chains. As to expression, red blood cells.

In terms of biological role, involved in oxygen transport from the lung to the various peripheral tissues. This chain is Hemoglobin subunit beta (HBB), found in Aotus azarae (Azara's night monkey).